A 285-amino-acid chain; its full sequence is 1-deoxypentalenic acid 11-beta-hydroxylase (285 aa).

Arg117 contributes to the substrate binding site. Residues His137 and Asp139 each contribute to the Fe cation site. 2-oxoglutarate-binding positions include 137–139 and Trp153; that span reads HQD. Position 188 (Arg188) interacts with substrate. His226 provides a ligand contact to Fe cation. Positions 228 and 240 each coordinate 2-oxoglutarate.

This sequence belongs to the PhyH family. It depends on Fe cation as a cofactor. Requires L-ascorbate as cofactor.

The enzyme catalyses 1-deoxypentalenate + 2-oxoglutarate + O2 = 1-deoxy-11beta-hydroxypentalenate + succinate + CO2. The protein operates within antibiotic biosynthesis; neopentalenolactone biosynthesis. Its function is as follows. Catalyzes the conversion of 1-deoxypentalenic acid to 11-beta-hydroxy-1-deoxypentalenic acid in the biosynthesis of neopentalenolactone antibiotic. The polypeptide is 1-deoxypentalenic acid 11-beta-hydroxylase (ptlH) (Streptomyces avermitilis (strain ATCC 31267 / DSM 46492 / JCM 5070 / NBRC 14893 / NCIMB 12804 / NRRL 8165 / MA-4680)).